The sequence spans 1024 residues: PH and SEC7 domain-containing protein 1 (1024 aa).

Disordered stretches follow at residues 25–98 (WLPE…GAQS), 113–230 (PLNG…EVSS), 246–401 (SLDP…GPDS), and 430–536 (ASPG…LDST). Pro residues predominate over residues 71–95 (RGPPSPRVAPSPWAPSSPTGQPPPG). Phosphoserine occurs at positions 126 and 156. Over residues 215 to 230 (FLNQGDTWSSPREVSS) the composition is skewed to polar residues. Acidic residues predominate over residues 300-313 (DIDEVLAEREEADS). The segment covering 327-342 (TAYPPAPRPGPLPGPH) has biased composition (pro residues). Residues 349 to 369 (NEDEDDDEAGGEEDVDDEVFE) are compositionally biased toward acidic residues. Positions 445 to 463 (PPQPPAPRPDPPAPAPLAP) are enriched in pro residues. One can recognise an SEC7 domain in the interval 512–706 (GAAPLGSEPP…KALYSSIKNE (195 aa)). Ser720 is modified (phosphoserine). Residues 756 to 869 (AVYKHGALVR…WITRINVVAA (114 aa)) enclose the PH domain. The stretch at 898 to 924 (LSQEEQVRTHEAKLKAMASELREHRAA) forms a coiled coil. The tract at residues 976-1024 (ALAQAGSTEDGLPPSHSSPSLQPKPSSQPRAQRHSSEPRPGAGSGRRKP) is disordered. A compositionally biased stretch (low complexity) spans 987–1004 (LPPSHSSPSLQPKPSSQP).

It belongs to the PSD family. As to quaternary structure, interacts with ACTN1. Interacts (ARF6-bound form) with KCNK1; does not interact with KCNK1 in the absence of ARF6. Isoform 2 is expressed in the brain.

It is found in the cell membrane. Its subcellular location is the cell projection. The protein resides in the ruffle membrane. It localises to the cleavage furrow. In terms of biological role, guanine nucleotide exchange factor for ARF6. Induces cytoskeletal remodeling. The sequence is that of PH and SEC7 domain-containing protein 1 (PSD) from Homo sapiens (Human).